The sequence spans 200 residues: Small ribosomal subunit protein uS5 (200 aa).

Positions 1–22 (MAEERGEKRGRRRDRENPRDRD) are enriched in basic and acidic residues. The interval 1–26 (MAEERGEKRGRRRDRENPRDRDDESS) is disordered. One can recognise an S5 DRBM domain in the interval 28-91 (LVDKLVGINR…EEAKRNLVRI (64 aa)).

It belongs to the universal ribosomal protein uS5 family. As to quaternary structure, part of the 30S ribosomal subunit. Contacts proteins S4 and S8.

Its function is as follows. With S4 and S12 plays an important role in translational accuracy. In terms of biological role, located at the back of the 30S subunit body where it stabilizes the conformation of the head with respect to the body. This chain is Small ribosomal subunit protein uS5, found in Hyphomonas neptunium (strain ATCC 15444).